The sequence spans 250 residues: Mediator of RNA polymerase II transcription subunit 6 (250 aa).

Residues 166–250 (KKREEEKKED…EPTARTTSKQ (85 aa)) form a disordered region. Acidic residues predominate over residues 204 to 223 (PAEDALEREEKEEVEEEEEE). The span at 224-239 (TLKTEEPTTSTDEPKF) shows a compositional bias: basic and acidic residues.

Belongs to the Mediator complex subunit 6 family. Component of the Mediator complex. Interacts with let-19/mdt-13. Interacts with RNA polymerase II. Interacts with mdt-28.

The protein localises to the nucleus. Its function is as follows. Component of the Mediator complex, a coactivator involved in the regulated transcription of nearly all RNA polymerase II-dependent genes. Mediator functions as a bridge to convey information from gene-specific regulatory proteins to the basal RNA polymerase II transcription machinery. Mediator is recruited to promoters by direct interactions with regulatory proteins and serves as a scaffold for the assembly of a functional preinitiation complex with RNA polymerase II and the general transcription factors. Acts to repress beta-catenin target genes. Required for asymmetric division of T-cells and for gonad and germ cell development. This Caenorhabditis elegans protein is Mediator of RNA polymerase II transcription subunit 6 (mdt-6).